Here is a 470-residue protein sequence, read N- to C-terminus: tRNA modification GTPase MnmE (470 aa).

Positions 30, 92, and 132 each coordinate (6S)-5-formyl-5,6,7,8-tetrahydrofolate. One can recognise a TrmE-type G domain in the interval 227–393 (GLQVALVGRP…LIKAVLKTCG (167 aa)). N237 lines the K(+) pocket. GTP contacts are provided by residues 237 to 242 (NVGKSS), 256 to 262 (TDLPGTT), 281 to 284 (DTAG), and 342 to 345 (NKAD). Mg(2+) is bound at residue S241. K(+) contacts are provided by T256, L258, and T261. A Mg(2+)-binding site is contributed by T262. Residue K470 participates in (6S)-5-formyl-5,6,7,8-tetrahydrofolate binding.

It belongs to the TRAFAC class TrmE-Era-EngA-EngB-Septin-like GTPase superfamily. TrmE GTPase family. In terms of assembly, homodimer. Heterotetramer of two MnmE and two MnmG subunits. K(+) is required as a cofactor.

It is found in the cytoplasm. Its function is as follows. Exhibits a very high intrinsic GTPase hydrolysis rate. Involved in the addition of a carboxymethylaminomethyl (cmnm) group at the wobble position (U34) of certain tRNAs, forming tRNA-cmnm(5)s(2)U34. The polypeptide is tRNA modification GTPase MnmE (Prochlorococcus marinus (strain MIT 9313)).